The primary structure comprises 170 residues: MAAGFNWFLVLSSVFLCNLVKTFLPSISSFLSKIFHKDADQEMEMRTEIQNMKMELSTISMMDEFARYARLERKINKMTDQLKTLVKSRTAQQAKMKWIVNIAFYILQAALMISLILKYYADPVTVVPSKWIAPLERLVAFPSGVAGGVGITCWLVVCNKVVALILQAVS.

The Lumenal portion of the chain corresponds to 1–6 (MAAGFN). The chain crosses the membrane as a helical span at residues 7 to 27 (WFLVLSSVFLCNLVKTFLPSI). Topologically, residues 28 to 96 (SSFLSKIFHK…KSRTAQQAKM (69 aa)) are cytoplasmic. The interval 35-93 (FHKDADQEMEMRTEIQNMKMELSTISMMDEFARYARLERKINKMTDQLKTLVKSRTAQQ) is interaction with GET3/TRC40. Positions 61-91 (MMDEFARYARLERKINKMTDQLKTLVKSRTA) form a coiled coil. Residues 97-117 (KWIVNIAFYILQAALMISLIL) form a helical membrane-spanning segment. The Lumenal portion of the chain corresponds to 118–137 (KYYADPVTVVPSKWIAPLER). A helical transmembrane segment spans residues 138 to 158 (LVAFPSGVAGGVGITCWLVVC). The Cytoplasmic segment spans residues 159–170 (NKVVALILQAVS).

It belongs to the WRB/GET1 family. In terms of assembly, component of the Golgi to ER traffic (GET) complex, which is composed of GET1/WRB, CAMLG/GET2 and GET3/TRC40. Within the complex, GET1 and CAMLG form a heterotetramer which is stabilized by phosphatidylinositol binding and which binds to the GET3 homodimer.

It is found in the endoplasmic reticulum membrane. Functionally, required for the post-translational delivery of tail-anchored (TA) proteins to the endoplasmic reticulum (ER). Together with CAMLG/GET2, acts as a membrane receptor for soluble GET3/TRC40, which recognizes and selectively binds the transmembrane domain of TA proteins in the cytosol. Required to ensure correct topology and ER insertion of CAMLG. This is Guided entry of tail-anchored proteins factor 1 from Danio rerio (Zebrafish).